A 231-amino-acid polypeptide reads, in one-letter code: ATP phosphoribosyltransferase (231 aa).

It belongs to the ATP phosphoribosyltransferase family. Short subfamily. In terms of assembly, heteromultimer composed of HisG and HisZ subunits.

The protein resides in the cytoplasm. The catalysed reaction is 1-(5-phospho-beta-D-ribosyl)-ATP + diphosphate = 5-phospho-alpha-D-ribose 1-diphosphate + ATP. It functions in the pathway amino-acid biosynthesis; L-histidine biosynthesis; L-histidine from 5-phospho-alpha-D-ribose 1-diphosphate: step 1/9. Its function is as follows. Catalyzes the condensation of ATP and 5-phosphoribose 1-diphosphate to form N'-(5'-phosphoribosyl)-ATP (PR-ATP). Has a crucial role in the pathway because the rate of histidine biosynthesis seems to be controlled primarily by regulation of HisG enzymatic activity. This is ATP phosphoribosyltransferase (hisG) from Sinorhizobium fredii (strain NBRC 101917 / NGR234).